The following is an 859-amino-acid chain: Envelope glycoprotein (859 aa).

A propeptide spanning residues 1-6 (MVSIAF) is cleaved from the precursor. At 7-614 (YGGIPGGIST…KDLWSHIGNW (608 aa)) the chain is on the extracellular side. Residues asparagine 40, asparagine 112, asparagine 141, asparagine 148, asparagine 186, asparagine 214, asparagine 233, asparagine 244, asparagine 340, asparagine 368, asparagine 399, asparagine 406, and asparagine 411 are each glycosylated (N-linked (GlcNAc...) asparagine; by host). A fusion peptide region spans residues 446–466 (FGISAIVAAIVAATAIAASAT). N-linked (GlcNAc...) asparagine; by host glycans are attached at residues asparagine 483 and asparagine 490. Residues 498–513 (LIERQIKILYAMILQT) are immunosuppression. 2 N-linked (GlcNAc...) asparagine; by host glycosylation sites follow: asparagine 550 and asparagine 557. 2 coiled-coil regions span residues 576–624 (ILTT…SIIK) and 663–699 (KKFHHKHASREDTWDQAQHNIHLAGVTGGSGDKYYKQ). Residues 615–635 (IPGLGASIIKYIVMFLLIYLL) traverse the membrane as a helical segment. Residues 636–859 (LTSSPKILRA…TSHVSMPQYV (224 aa)) lie on the Cytoplasmic side of the membrane.

As to quaternary structure, the mature envelope protein (Env) consists of a trimer of SU-TM heterodimers attached by noncovalent interactions or by a labile interchain disulfide bond. In terms of processing, specific enzymatic cleavages in vivo yield mature proteins. Envelope glycoproteins are synthesized as an inactive precursor that is N-glycosylated and processed likely by host cell furin or by a furin-like protease in the Golgi to yield the mature SU and TM proteins. The cleavage site between SU and TM requires the minimal sequence [KR]-X-[KR]-R.

It is found in the virion membrane. It localises to the host cell membrane. The surface protein (SU) attaches the virus to the host cell by binding to its receptor. This interaction triggers the refolding of the transmembrane protein (TM) and is thought to activate its fusogenic potential by unmasking its fusion peptide. Fusion occurs at the host cell plasma membrane. Functionally, the transmembrane protein (TM) acts as a class I viral fusion protein. Under the current model, the protein has at least 3 conformational states: pre-fusion native state, pre-hairpin intermediate state, and post-fusion hairpin state. During viral and target cell membrane fusion, the coiled coil regions (heptad repeats) assume a trimer-of-hairpins structure, positioning the fusion peptide in close proximity to the C-terminal region of the ectodomain. The formation of this structure appears to drive apposition and subsequent fusion of viral and target cell membranes. Membranes fusion leads to delivery of the nucleocapsid into the cytoplasm. This is Envelope glycoprotein (env) from Equine infectious anemia virus (isolate 1369) (EIAV).